We begin with the raw amino-acid sequence, 363 residues long: S-adenosylmethionine:tRNA ribosyltransferase-isomerase (363 aa).

It belongs to the QueA family. In terms of assembly, monomer.

It is found in the cytoplasm. It catalyses the reaction 7-aminomethyl-7-carbaguanosine(34) in tRNA + S-adenosyl-L-methionine = epoxyqueuosine(34) in tRNA + adenine + L-methionine + 2 H(+). The protein operates within tRNA modification; tRNA-queuosine biosynthesis. Functionally, transfers and isomerizes the ribose moiety from AdoMet to the 7-aminomethyl group of 7-deazaguanine (preQ1-tRNA) to give epoxyqueuosine (oQ-tRNA). The protein is S-adenosylmethionine:tRNA ribosyltransferase-isomerase of Haemophilus influenzae (strain ATCC 51907 / DSM 11121 / KW20 / Rd).